Consider the following 481-residue polypeptide: ATP synthase subunit beta (481 aa).

An ATP-binding site is contributed by 167–174 (GGAGVGKT).

Belongs to the ATPase alpha/beta chains family. As to quaternary structure, F-type ATPases have 2 components, CF(1) - the catalytic core - and CF(0) - the membrane proton channel. CF(1) has five subunits: alpha(3), beta(3), gamma(1), delta(1), epsilon(1). CF(0) has three main subunits: a(1), b(2) and c(9-12). The alpha and beta chains form an alternating ring which encloses part of the gamma chain. CF(1) is attached to CF(0) by a central stalk formed by the gamma and epsilon chains, while a peripheral stalk is formed by the delta and b chains.

The protein localises to the cell membrane. It catalyses the reaction ATP + H2O + 4 H(+)(in) = ADP + phosphate + 5 H(+)(out). Produces ATP from ADP in the presence of a proton gradient across the membrane. The catalytic sites are hosted primarily by the beta subunits. This Corynebacterium diphtheriae (strain ATCC 700971 / NCTC 13129 / Biotype gravis) protein is ATP synthase subunit beta.